The chain runs to 374 residues: RNA binding protein fox-1 homolog 3 (374 aa).

Positions 1-29 (MAQPYPPAQYPPPPQNGIPAEYAPPPPHP) are enriched in pro residues. Residues 1-105 (MAQPYPPAQY…QQPKRLHVSN (105 aa)) are disordered. Residues 49-74 (TPAQTHPEQPGTEASTQPIAGTQTVP) show a composition bias toward polar residues. Residues 99–175 (KRLHVSNIPF…RKIEVNNATA (77 aa)) form the RRM domain. R223 is modified (asymmetric dimethylarginine; alternate). Omega-N-methylarginine; alternate is present on R223. Position 319 is an asymmetric dimethylarginine (R319).

In terms of processing, phosphorylated. In terms of tissue distribution, widely expressed in brain, including in cerebral cortex, hippocampus, thalamus, caudate/putamen, cerebellum, as well as in the spinal cord (at protein level). Not expressed in all neuronal cells within a region, in cerebellum, expression is absent in Purkinje cells (at protein level). Expressed in the retina in the ganglion cells and some cells in the inner nuclear layer, but absent from the photoreceptor cells and most cells in the inner nuclear layer (at protein level).

The protein localises to the nucleus. The protein resides in the cytoplasm. Its function is as follows. Pre-mRNA alternative splicing regulator. Regulates alternative splicing of RBFOX2 to enhance the production of mRNA species that are targeted for nonsense-mediated decay (NMD). In Mus musculus (Mouse), this protein is RNA binding protein fox-1 homolog 3 (Rbfox3).